Reading from the N-terminus, the 572-residue chain is NADP-dependent malic enzyme (572 aa).

Residue Met-1 is modified to N-acetylmethionine. Residue Tyr-102 is the Proton donor of the active site. An NADP(+)-binding site is contributed by Arg-155. Lys-173 serves as the catalytic Proton acceptor. The a divalent metal cation site is built by Glu-245, Asp-246, and Asp-269. NADP(+)-binding positions include Asp-269 and 301 to 318 (GAGEAALGIAHLVVMAME). Residue Ser-336 is modified to Phosphoserine.

Belongs to the malic enzymes family. As to quaternary structure, homotetramer. It depends on Mg(2+) as a cofactor. Mn(2+) serves as cofactor.

The protein resides in the cytoplasm. The enzyme catalyses (S)-malate + NADP(+) = pyruvate + CO2 + NADPH. It carries out the reaction oxaloacetate + H(+) = pyruvate + CO2. Its function is as follows. Catalyzes the oxidative decarboxylation of (S)-malate in the presence of NADP(+) and divalent metal ions, and decarboxylation of oxaloacetate. The polypeptide is NADP-dependent malic enzyme (Me1) (Mus musculus (Mouse)).